An 837-amino-acid chain; its full sequence is ABC transporter A family member 8 (837 aa).

7 helical membrane passes run Y29 to I49, V244 to L264, L303 to G323, F326 to F346, V356 to N376, G393 to L413, and L455 to A475. In terms of domain architecture, ABC transporter spans I516–I750. ATP is bound at residue G553–S560.

Belongs to the ABC transporter superfamily. ABCA family.

The protein localises to the membrane. In Dictyostelium discoideum (Social amoeba), this protein is ABC transporter A family member 8 (abcA8).